Consider the following 97-residue polypeptide: MKLRPLHDRVVIRRSEEETKTAGGIVLPGSAAEKPNRGEIVAVGTGRVLDNGEVRALAVKVGDKVVFGPYSGSNTVKVDGEDLLVMSENEILAVVEG.

This sequence belongs to the GroES chaperonin family. Heptamer of 7 subunits arranged in a ring. Interacts with the chaperonin GroEL.

It is found in the cytoplasm. In terms of biological role, together with the chaperonin GroEL, plays an essential role in assisting protein folding. The GroEL-GroES system forms a nano-cage that allows encapsulation of the non-native substrate proteins and provides a physical environment optimized to promote and accelerate protein folding. GroES binds to the apical surface of the GroEL ring, thereby capping the opening of the GroEL channel. The protein is Co-chaperonin GroES of Pseudomonas savastanoi pv. phaseolicola (strain 1448A / Race 6) (Pseudomonas syringae pv. phaseolicola (strain 1448A / Race 6)).